We begin with the raw amino-acid sequence, 449 residues long: Cysteine--tRNA ligase (449 aa).

Cys-30 provides a ligand contact to Zn(2+). Residues 32–42 carry the 'HIGH' region motif; sequence PTVYDRAHLGN. Zn(2+) is bound by residues Cys-210, His-235, and Glu-239. Positions 268-272 match the 'KMSKS' region motif; sequence KMSKS. Residue Lys-271 participates in ATP binding.

This sequence belongs to the class-I aminoacyl-tRNA synthetase family. As to quaternary structure, monomer. It depends on Zn(2+) as a cofactor.

Its subcellular location is the cytoplasm. It carries out the reaction tRNA(Cys) + L-cysteine + ATP = L-cysteinyl-tRNA(Cys) + AMP + diphosphate. This chain is Cysteine--tRNA ligase, found in Acidiphilium cryptum (strain JF-5).